A 92-amino-acid chain; its full sequence is PqqA binding protein (92 aa).

This sequence belongs to the PqqD family. Monomer. Interacts with PqqE.

The protein operates within cofactor biosynthesis; pyrroloquinoline quinone biosynthesis. In terms of biological role, functions as a PqqA binding protein and presents PqqA to PqqE, in the pyrroloquinoline quinone (PQQ) biosynthetic pathway. This chain is PqqA binding protein, found in Klebsiella pneumoniae (strain 342).